Consider the following 221-residue polypeptide: ATP phosphoribosyltransferase (221 aa).

Belongs to the ATP phosphoribosyltransferase family. Short subfamily. In terms of assembly, heteromultimer composed of HisG and HisZ subunits.

Its subcellular location is the cytoplasm. The enzyme catalyses 1-(5-phospho-beta-D-ribosyl)-ATP + diphosphate = 5-phospho-alpha-D-ribose 1-diphosphate + ATP. Its pathway is amino-acid biosynthesis; L-histidine biosynthesis; L-histidine from 5-phospho-alpha-D-ribose 1-diphosphate: step 1/9. Functionally, catalyzes the condensation of ATP and 5-phosphoribose 1-diphosphate to form N'-(5'-phosphoribosyl)-ATP (PR-ATP). Has a crucial role in the pathway because the rate of histidine biosynthesis seems to be controlled primarily by regulation of HisG enzymatic activity. The polypeptide is ATP phosphoribosyltransferase (Rhizorhabdus wittichii (strain DSM 6014 / CCUG 31198 / JCM 15750 / NBRC 105917 / EY 4224 / RW1) (Sphingomonas wittichii)).